A 236-amino-acid polypeptide reads, in one-letter code: Eukaryotic translation initiation factor 3 subunit K (236 aa).

Residues tyrosine 42 to lysine 222 form the PCI domain.

This sequence belongs to the eIF-3 subunit K family. Component of the eukaryotic translation initiation factor 3 (eIF-3) complex.

It is found in the cytoplasm. Component of the eukaryotic translation initiation factor 3 (eIF-3) complex, which is involved in protein synthesis of a specialized repertoire of mRNAs and, together with other initiation factors, stimulates binding of mRNA and methionyl-tRNAi to the 40S ribosome. The eIF-3 complex specifically targets and initiates translation of a subset of mRNAs involved in cell proliferation. In Brugia malayi (Filarial nematode worm), this protein is Eukaryotic translation initiation factor 3 subunit K.